We begin with the raw amino-acid sequence, 424 residues long: C4-dicarboxylate transport protein (424 aa).

The next 8 helical transmembrane spans lie at Ser-4–Gly-24, Leu-44–Met-64, Val-76–Val-96, Ile-142–Phe-162, Val-184–Phe-206, Leu-222–Ala-242, Ile-326–Val-346, and Ile-352–Ile-372.

The protein belongs to the dicarboxylate/amino acid:cation symporter (DAACS) (TC 2.A.23) family.

Its subcellular location is the cell inner membrane. Its function is as follows. Responsible for the transport of dicarboxylates such as succinate, fumarate, and malate from the periplasm across the membrane. In Erwinia tasmaniensis (strain DSM 17950 / CFBP 7177 / CIP 109463 / NCPPB 4357 / Et1/99), this protein is C4-dicarboxylate transport protein.